Here is a 293-residue protein sequence, read N- to C-terminus: Homoserine kinase (293 aa).

84–94 serves as a coordination point for ATP; sequence PLSRGLGSSSA.

It belongs to the GHMP kinase family. Homoserine kinase subfamily.

It localises to the cytoplasm. The catalysed reaction is L-homoserine + ATP = O-phospho-L-homoserine + ADP + H(+). It functions in the pathway amino-acid biosynthesis; L-threonine biosynthesis; L-threonine from L-aspartate: step 4/5. In terms of biological role, catalyzes the ATP-dependent phosphorylation of L-homoserine to L-homoserine phosphate. In Aliarcobacter butzleri (strain RM4018) (Arcobacter butzleri), this protein is Homoserine kinase.